Consider the following 307-residue polypeptide: MAVVTMRQLLESGVHFGHQTRRWNPKMKRFIMTERNGIYIIDLQQSLAYIDRSYAFVKETVAKGGTIMFVGTKKQAQEAIAEQATRVGMPYVNQRWLGGMLTNFSTVHQRINRLKELDEIDFDDVAGSSRTKKELLQMRRERDKLNKSLGGIREMTRTPSAVWIVDTNKEHLAVEEARKLRIPIIGILDSNCDPDLVDFPIPGNDDAIRAVGLLTRVVADAVAEGLIARSGVKAGEGAEAVGAEEPLAEWERELLGGEAEQAAVDATGGAATEETPAAESTGAASEAAAVSEAAEPATEQPAADAEA.

The tract at residues 256-307 (GGEAEQAAVDATGGAATEETPAAESTGAASEAAAVSEAAEPATEQPAADAEA) is disordered. A compositionally biased stretch (low complexity) spans 259 to 307 (AEQAAVDATGGAATEETPAAESTGAASEAAAVSEAAEPATEQPAADAEA).

This sequence belongs to the universal ribosomal protein uS2 family.

The chain is Small ribosomal subunit protein uS2 from Nocardioides sp. (strain ATCC BAA-499 / JS614).